The sequence spans 87 residues: Small ribosomal subunit protein eS21 (87 aa).

N-acetylmethionine is present on methionine 1.

This sequence belongs to the eukaryotic ribosomal protein eS21 family. In terms of assembly, component of the small ribosomal subunit (SSU). Mature yeast ribosomes consist of a small (40S) and a large (60S) subunit. The 40S small subunit contains 1 molecule of ribosomal RNA (18S rRNA) and at least 33 different proteins. The large 60S subunit contains 3 rRNA molecules (25S, 5.8S and 5S rRNA) and at least 46 different proteins. Interacts with uS2A and uS2B, strongest interaction is with uS2B.

It is found in the cytoplasm. The protein resides in the nucleus. Functionally, component of the ribosome, a large ribonucleoprotein complex responsible for the synthesis of proteins in the cell. The small ribosomal subunit (SSU) binds messenger RNAs (mRNAs) and translates the encoded message by selecting cognate aminoacyl-transfer RNA (tRNA) molecules. The large subunit (LSU) contains the ribosomal catalytic site termed the peptidyl transferase center (PTC), which catalyzes the formation of peptide bonds, thereby polymerizing the amino acids delivered by tRNAs into a polypeptide chain. The nascent polypeptides leave the ribosome through a tunnel in the LSU and interact with protein factors that function in enzymatic processing, targeting, and the membrane insertion of nascent chains at the exit of the ribosomal tunnel. eS21 is required for the processing of the 20S rRNA-precursor to mature 18S rRNA in a late step of the maturation of 40S ribosomal subunits. Has a physiological role leading to 18S rRNA stability. This chain is Small ribosomal subunit protein eS21 (rps21), found in Schizosaccharomyces pombe (strain 972 / ATCC 24843) (Fission yeast).